Here is a 615-residue protein sequence, read N- to C-terminus: NEDD8 ultimate buster 1 (615 aa).

Coiled-coil stretches lie at residues 36 to 70 and 152 to 203; these read LALK…AIER and KAMV…AAET. 3 consecutive UBA domains span residues 374 to 413, 424 to 470, and 489 to 529; these read YIDP…HITN, EEKE…LLSN, and SPSQ…LAHN. The Nuclear localization signal signature appears at 414–431; the sequence is RREELAQIRKEEKEKKRR. Residues 427 to 474 are NEDD8-binding 1; that stretch reads EKKRRRLENIRFLKGMGYSTHAAQQVLHAASGNLDEALKILLSNPQMW. Residues 532-586 are disordered; sequence SLPPELPLSPEDSLSPPATSPSDSAGTSSASTDEDMETEAVNEILEDIPEHEEDY. Low complexity predominate over residues 539–562; that stretch reads LSPEDSLSPPATSPSDSAGTSSAS. Residues 550–598 form an NEDD8-binding 2 region; it reads TSPSDSAGTSSASTDEDMETEAVNEILEDIPEHEEDYLDSTLEDEEIII. The span at 563–586 shows a compositional bias: acidic residues; that stretch reads TDEDMETEAVNEILEDIPEHEEDY.

As to quaternary structure, directly interacts with NEDD8 and PSMD4/S5a, a member of the regulatory subunit of the 26S proteasome. Isoform 1 binds to NEDD8 more efficiently than isoform 2. Interacts with AIPL1. The interaction with UBD via UBA domains facilitates the linking of UBD-conjugated target protein to the proteasome complex and accelerates UBD degradation and that of its conjugates. As to expression, widely expressed with lowest expression in the pancreas for isoform 1 and in leukocytes, liver, prostate and skeletal muscle for isoform 2.

It is found in the nucleus. Functionally, specific down-regulator of the NEDD8 conjugation system. Recruits NEDD8, UBD, and their conjugates to the proteasome for degradation. Isoform 1 promotes the degradation of NEDD8 more efficiently than isoform 2. The sequence is that of NEDD8 ultimate buster 1 (NUB1) from Homo sapiens (Human).